A 101-amino-acid chain; its full sequence is MDFIEGEKDQRQKCDTAKQVNCEKYLQASHYGLLMLLFSCCSALRCVQNPFSWLLYKRDLRRKLKWEKTEKCAIPIRCKNERSKGKRTKSYLKGYIGCKIS.

This is an uncharacterized protein from Saccharomyces cerevisiae (strain ATCC 204508 / S288c) (Baker's yeast).